A 213-amino-acid polypeptide reads, in one-letter code: Orotate phosphoribosyltransferase (213 aa).

K26 contacts 5-phospho-alpha-D-ribose 1-diphosphate. Orotate is bound at residue 34–35 (FF). 5-phospho-alpha-D-ribose 1-diphosphate is bound by residues 72–73 (YK), R99, K100, K103, H105, and 124–132 (DDVITAGTA). The orotate site is built by T128 and R156.

This sequence belongs to the purine/pyrimidine phosphoribosyltransferase family. PyrE subfamily. Homodimer. Mg(2+) serves as cofactor.

The catalysed reaction is orotidine 5'-phosphate + diphosphate = orotate + 5-phospho-alpha-D-ribose 1-diphosphate. It participates in pyrimidine metabolism; UMP biosynthesis via de novo pathway; UMP from orotate: step 1/2. Catalyzes the transfer of a ribosyl phosphate group from 5-phosphoribose 1-diphosphate to orotate, leading to the formation of orotidine monophosphate (OMP). This is Orotate phosphoribosyltransferase from Shigella flexneri serotype 5b (strain 8401).